Here is a 354-residue protein sequence, read N- to C-terminus: Arginase-2, mitochondrial (354 aa).

The transit peptide at 1-22 directs the protein to the mitochondrion; it reads MSYGSCVSRLLRTRVQSVLKKS. Mn(2+) contacts are provided by histidine 120, aspartate 143, histidine 145, and aspartate 147. Residues 145-149, 156-158, and aspartate 202 each bind substrate; these read HADIN and SGN. Positions 251 and 253 each coordinate Mn(2+). Substrate contacts are provided by threonine 265 and glutamate 296. A disordered region spans residues 330-354; that stretch reads GHTVYEQLPPPSSPHESENAERVRI. Residues 344–354 are compositionally biased toward basic and acidic residues; that stretch reads HESENAERVRI.

This sequence belongs to the arginase family. As to quaternary structure, homotrimer. Mn(2+) serves as cofactor.

The protein resides in the mitochondrion. The enzyme catalyses L-arginine + H2O = urea + L-ornithine. It participates in nitrogen metabolism; urea cycle; L-ornithine and urea from L-arginine: step 1/1. May play a role in the regulation of extra-urea cycle arginine metabolism and also in down-regulation of nitric oxide synthesis. Extrahepatic arginase functions to regulate L-arginine bioavailability to nitric oxid synthase (NOS). Arginine metabolism is a critical regulator of innate and adaptive immune responses. Seems to be involved in negative regulation of the survival capacity of activated T cells. May suppress inflammation-related signaling in asthmatic airway epithelium. May play a role in promoting prenatal immune suppression. Regulates RPS6KB1 signaling, which promotes endothelial cell senescence and inflammation and implicates NOS3/eNOS dysfunction. Can inhibit endothelial autophagy independently of its enzymatic activity implicating mTORC2 signaling. Involved in vascular smooth muscle cell senescence and apoptosis independently of its enzymatic activity. This Oryctolagus cuniculus (Rabbit) protein is Arginase-2, mitochondrial (ARG2).